A 533-amino-acid chain; its full sequence is Frizzled/smoothened-like sans CRD protein H (533 aa).

Positions 1-21 (MFIKFYFFIIFLILNFKNNYA) are cleaved as a signal peptide. The Extracellular portion of the chain corresponds to 22 to 103 (SPTLLDSVLS…GDWTTMMDMS (82 aa)). A glycan (N-linked (GlcNAc...) asparagine) is linked at asparagine 76. A helical membrane pass occupies residues 104 to 124 (LIVATISFFASIFLILTYSPL). Residues 125 to 134 (MNPSYNNRHT) lie on the Cytoplasmic side of the membrane. A helical membrane pass occupies residues 135–155 (IGILSMSFGIFLIMFTDMYNL). Residues 156-177 (KKRFTLGCPSETRYAIQNDADC) lie on the Extracellular side of the membrane. A helical transmembrane segment spans residues 178–198 (LITGLIFQFGCVSAVFFWTAL). Residues 199–216 (SLDLYFQITNRNISRKYD) lie on the Cytoplasmic side of the membrane. The helical transmembrane segment at 217–237 (LYYFIGVNLISLIFTFVPVIS) threads the bilayer. At 238–259 (KSYGYGDFALGCWILDFNYALG) the chain is on the extracellular side. Residues 260–280 (CFWIPLSVCLIFSTVVVLMIL) traverse the membrane as a helical segment. Topologically, residues 281-302 (YEVYKIYKASNQKTSLKGHIKP) are cytoplasmic. The chain crosses the membrane as a helical span at residues 303–323 (LLCLISNCFEFFYVFGYSLYL). At 324–360 (ATKLTELHDNMDAYIKCLFLNSQNDPDSYTCPDHRLK) the chain is on the extracellular side. Residues 361-381 (LGPQFLFFLSLRLLGVSGIVF) form a helical membrane-spanning segment. Residues 382–533 (YGTNSKVRKI…LTNINTIDNV (152 aa)) are Cytoplasmic-facing. Residues 454 to 533 (IIVTPGGDDD…LTNINTIDNV (80 aa)) form a disordered region. Positions 466 to 518 (NNNNNNNNNNNNNNNNNNNNNNNNNNNNNNNNNNNNNNNNNNNNNSNENNENN) are enriched in low complexity. A coiled-coil region spans residues 501-528 (NNNNNNNNNNSNENNENNTQEIELTNIN). Positions 519–533 (TQEIELTNINTIDNV) are enriched in polar residues.

Belongs to the G-protein coupled receptor Fz/Smo family.

Its subcellular location is the membrane. This is Frizzled/smoothened-like sans CRD protein H (fscH) from Dictyostelium discoideum (Social amoeba).